The primary structure comprises 370 residues: Probable pectin lyase E (370 aa).

A disulfide bridge links Cys-75 with Cys-96. The active site involves Arg-245. The N-linked (GlcNAc...) asparagine glycan is linked to Asn-307. Cys-311 and Cys-319 are oxidised to a cystine.

Belongs to the polysaccharide lyase 1 family.

It is found in the secreted. The enzyme catalyses Eliminative cleavage of (1-&gt;4)-alpha-D-galacturonan methyl ester to give oligosaccharides with 4-deoxy-6-O-methyl-alpha-D-galact-4-enuronosyl groups at their non-reducing ends.. In terms of biological role, pectinolytic enzymes consist of four classes of enzymes: pectin lyase, polygalacturonase, pectin methylesterase and rhamnogalacturonase. Among pectinolytic enzymes, pectin lyase is the most important in depolymerization of pectin, since it cleaves internal glycosidic bonds of highly methylated pectins. In Aspergillus niger, this protein is Probable pectin lyase E (pelE).